Reading from the N-terminus, the 277-residue chain is Large ribosomal subunit protein uL2 (277 aa).

The segment at 222–277 is disordered; it reads GVAMNPVDHPHGGGEGRTSGGRHPVTPWGKPTKGKKTRSNKATDKFIMRSRHQRKK.

The protein belongs to the universal ribosomal protein uL2 family. As to quaternary structure, part of the 50S ribosomal subunit. Forms a bridge to the 30S subunit in the 70S ribosome.

Its function is as follows. One of the primary rRNA binding proteins. Required for association of the 30S and 50S subunits to form the 70S ribosome, for tRNA binding and peptide bond formation. It has been suggested to have peptidyltransferase activity; this is somewhat controversial. Makes several contacts with the 16S rRNA in the 70S ribosome. In Brucella abortus (strain S19), this protein is Large ribosomal subunit protein uL2.